A 954-amino-acid chain; its full sequence is Endoplasmic reticulum aminopeptidase 2 (954 aa).

At methionine 1–lysine 7 the chain is on the cytoplasmic side. Residues leucine 8–isoleucine 28 traverse the membrane as a helical; Signal-anchor for type II membrane protein segment. Topologically, residues cysteine 29–isoleucine 954 are lumenal. Asparagine 79 and asparagine 113 each carry an N-linked (GlcNAc...) asparagine glycan. Residues glutamate 194 and glycine 328–asparagine 332 contribute to the substrate site. A Zn(2+)-binding site is contributed by histidine 364. Glutamate 365 functions as the Proton acceptor in the catalytic mechanism. Residues histidine 368 and glutamate 387 each coordinate Zn(2+). Residue asparagine 399 is glycosylated (N-linked (GlcNAc...) asparagine). Residues cysteine 415 and cysteine 454 are joined by a disulfide bond. N-linked (GlcNAc...) asparagine glycosylation is present at asparagine 644. An intrachain disulfide couples cysteine 753 to cysteine 760.

This sequence belongs to the peptidase M1 family. In terms of assembly, heterodimer with ERAP1. The cofactor is Zn(2+). Post-translationally, N-glycosylated.

It localises to the endoplasmic reticulum membrane. Aminopeptidase that plays a central role in peptide trimming, a step required for the generation of most HLA class I-binding peptides. Peptide trimming is essential to customize longer precursor peptides to fit them to the correct length required for presentation on MHC class I molecules. Preferentially hydrolyzes the basic residues Arg and Lys. The chain is Endoplasmic reticulum aminopeptidase 2 (ERAP2) from Bos taurus (Bovine).